Reading from the N-terminus, the 116-residue chain is Ribulose bisphosphate carboxylase small subunit 1 (116 aa).

It belongs to the RuBisCO small chain family. Heterohexadecamer of 8 large and 8 small subunits.

It is found in the cytoplasm. Its function is as follows. RuBisCO catalyzes two reactions: the carboxylation of D-ribulose 1,5-bisphosphate, the primary event in carbon dioxide fixation, as well as the oxidative fragmentation of the pentose substrate. Both reactions occur simultaneously and in competition at the same active site. Although the small subunit is not catalytic it is essential for maximal activity. In terms of biological role, can replace the endogenous type I ccbS gene in H.neapolitanus, reconstituting RuBisCO with about 10% of normal activity; the active enzyme is targeted to carboxysomes. In Hydrogenovibrio crunogenus (strain DSM 25203 / XCL-2) (Thiomicrospira crunogena), this protein is Ribulose bisphosphate carboxylase small subunit 1.